The sequence spans 302 residues: Oxygen-dependent coproporphyrinogen-III oxidase (302 aa).

Ser94 serves as a coordination point for substrate. Residues His98 and His108 each coordinate a divalent metal cation. Residue His108 is the Proton donor of the active site. 110 to 112 (NVR) lines the substrate pocket. Positions 147 and 177 each coordinate a divalent metal cation. The important for dimerization stretch occupies residues 242-277 (YVEFNLVYDRGTLFGLQTGGRTESILMSMPPLVRWQ). 260–262 (GGR) is a binding site for substrate.

Belongs to the aerobic coproporphyrinogen-III oxidase family. As to quaternary structure, homodimer. A divalent metal cation is required as a cofactor.

It is found in the cytoplasm. The catalysed reaction is coproporphyrinogen III + O2 + 2 H(+) = protoporphyrinogen IX + 2 CO2 + 2 H2O. It functions in the pathway porphyrin-containing compound metabolism; protoporphyrin-IX biosynthesis; protoporphyrinogen-IX from coproporphyrinogen-III (O2 route): step 1/1. In terms of biological role, involved in the heme biosynthesis. Catalyzes the aerobic oxidative decarboxylation of propionate groups of rings A and B of coproporphyrinogen-III to yield the vinyl groups in protoporphyrinogen-IX. The polypeptide is Oxygen-dependent coproporphyrinogen-III oxidase (Shewanella putrefaciens (strain CN-32 / ATCC BAA-453)).